A 440-amino-acid chain; its full sequence is 5-hydroxytryptamine receptor 6 (440 aa).

At 1–27 (MVPEPGPVNSSTPAWGPGPPPAPGGSG) the chain is on the extracellular side. An N-linked (GlcNAc...) asparagine glycan is attached at N9. The chain crosses the membrane as a helical span at residues 28-52 (WVAAALCVVIVLTAAANSLLIALIC). Topologically, residues 53–62 (TQPALRNTSN) are cytoplasmic. A helical membrane pass occupies residues 63 to 88 (FFLVSLFTSDLMVGLVVMPPAMLNAL). At 89-96 (YGRWVLAR) the chain is on the extracellular side. The chain crosses the membrane as a helical span at residues 97 to 122 (GLCLLWTAFDVMCCSASILNLCLISL). C99 and C180 are oxidised to a cystine. D106 serves as a coordination point for serotonin. Topologically, residues 123 to 142 (DRYLLILSPLRYKLRMTAPR) are cytoplasmic. The helical transmembrane segment at 143–167 (ALALILGAWSLAALASFLPLLLGWH) threads the bilayer. The Extracellular segment spans residues 168 to 185 (ELGKARTSAPGQCRLLAS). A helical membrane pass occupies residues 186-209 (LPYVLVASGVTFFLPSGAICFTYC). The Cytoplasmic segment spans residues 210–268 (RILLAARKQAVQVASLTTGTATAGQALETLQVPRTPRPGMESADSRRLTTKHSRKALKA). Residues 269–295 (SLTLGILLSMFFVTWLPFFVASIAQAV) traverse the membrane as a helical segment. The Extracellular portion of the chain corresponds to 296–301 (CDCISP). Residues 302-325 (GLFDVLTWLGYCNSTMNPIIYPLF) form a helical membrane-spanning segment. Residues 326–440 (MRDFKRALGR…RQHPLGSPMN (115 aa)) lie on the Cytoplasmic side of the membrane.

It belongs to the G-protein coupled receptor 1 family. Interacts with CDK5. Interacts with MTOR. Interacts with RPTOR and NF1.

It is found in the cell membrane. G-protein coupled receptor for 5-hydroxytryptamine (serotonin), a biogenic hormone that functions as a neurotransmitter, a hormone and a mitogen. Also has a high affinity for tricyclic psychotropic drugs. Ligand binding causes a conformation change that triggers signaling via guanine nucleotide-binding proteins (G proteins) and modulates the activity of downstream effectors. HTR6 is coupled to G(s) G alpha proteins and mediates activation of adenylate cyclase activity. Controls pyramidal neurons migration during corticogenesis, through the regulation of CDK5 activity. Is an activator of mTOR signaling. This is 5-hydroxytryptamine receptor 6 from Mus musculus (Mouse).